The following is a 232-amino-acid chain: Cytidylate kinase (232 aa).

19-27 serves as a coordination point for ATP; that stretch reads GPAGVGKTT.

The protein belongs to the cytidylate kinase family. Type 1 subfamily.

The protein resides in the cytoplasm. The catalysed reaction is CMP + ATP = CDP + ADP. It catalyses the reaction dCMP + ATP = dCDP + ADP. In Nitratidesulfovibrio vulgaris (strain ATCC 29579 / DSM 644 / CCUG 34227 / NCIMB 8303 / VKM B-1760 / Hildenborough) (Desulfovibrio vulgaris), this protein is Cytidylate kinase.